The primary structure comprises 531 residues: Peptide chain release factor 3 (531 aa).

The tr-type G domain occupies 10 to 278; it reads RRRRTFAIIS…SLIDWAPAPK (269 aa). Residues 19-26, 87-91, and 141-144 each bind GTP; these read SHPDAGKT, DTPGH, and NKYD.

This sequence belongs to the TRAFAC class translation factor GTPase superfamily. Classic translation factor GTPase family. PrfC subfamily.

It is found in the cytoplasm. Increases the formation of ribosomal termination complexes and stimulates activities of RF-1 and RF-2. It binds guanine nucleotides and has strong preference for UGA stop codons. It may interact directly with the ribosome. The stimulation of RF-1 and RF-2 is significantly reduced by GTP and GDP, but not by GMP. The protein is Peptide chain release factor 3 of Neisseria meningitidis serogroup B (strain ATCC BAA-335 / MC58).